Reading from the N-terminus, the 198-residue chain is Recombination protein RecR (198 aa).

The C4-type zinc-finger motif lies at 57-72 (CEKCNTFTEAQICEVC). The region spanning 80–175 (TLLCVVETPA…AVTRLARGVP (96 aa)) is the Toprim domain.

The protein belongs to the RecR family.

Functionally, may play a role in DNA repair. It seems to be involved in an RecBC-independent recombinational process of DNA repair. It may act with RecF and RecO. This Burkholderia cenocepacia (strain HI2424) protein is Recombination protein RecR.